A 609-amino-acid chain; its full sequence is Pair-rule protein odd-paired (609 aa).

A disordered region spans residues 20-41; it reads RMSPNTTASNSNAQQQQQQQLE. A compositionally biased stretch (polar residues) spans 22-32; sequence SPNTTASNSNA. A C2H2-type 1; atypical zinc finger spans residues 210–249; sequence MQCLWIDPDQPGLVPPGGRKTCNKVFHSMHEIVTHLTVEH. 4 consecutive C2H2-type zinc fingers follow at residues 258-285, 291-315, 321-345, and 351-375; these read HACF…IRVH, FACP…KRTH, FKCE…SHVH, and YNCR…MKVH. 2 disordered regions span residues 373–550 and 583–609; these read KVHG…ASAS and EAMN…ATAY. Over residues 399–409 the composition is skewed to polar residues; sequence IITGGAQTPPS. Composition is skewed to low complexity over residues 414 to 434 and 449 to 498; these read GSAG…IKSS and HLGA…LTAH. Positions 528–537 are enriched in basic residues; it reads SHHHHPHHHQ. The segment covering 538–550 has biased composition (low complexity); it reads AAPSPGAAAASAS. Over residues 591 to 601 the composition is skewed to basic residues; the sequence is FGHHHHHHHLM.

It belongs to the GLI C2H2-type zinc-finger protein family. In terms of tissue distribution, expressed throughout all segment primordia; expressed ubiquitously in the ectoderm and mesoderm precursors.

It localises to the nucleus. In terms of biological role, transcription factor essential for parasegmental subdivision of the embryo. It is involved in the activation of wingless (wg) in odd parasegments. It is also required for the timely activation of wg in the remaining parasegments and for the timely activation of engrailed (en) in all parasegments. This chain is Pair-rule protein odd-paired (opa), found in Drosophila melanogaster (Fruit fly).